Reading from the N-terminus, the 202-residue chain is Dephospho-CoA kinase (202 aa).

The region spanning 6 to 202 (KVSITGDLSS…EYFYALKGAL (197 aa)) is the DPCK domain. 14–19 (SSGKTE) contributes to the ATP binding site.

The protein belongs to the CoaE family.

It is found in the cytoplasm. It carries out the reaction 3'-dephospho-CoA + ATP = ADP + CoA + H(+). Its pathway is cofactor biosynthesis; coenzyme A biosynthesis; CoA from (R)-pantothenate: step 5/5. Functionally, catalyzes the phosphorylation of the 3'-hydroxyl group of dephosphocoenzyme A to form coenzyme A. The polypeptide is Dephospho-CoA kinase (Chlamydia felis (strain Fe/C-56) (Chlamydophila felis)).